The primary structure comprises 250 residues: Phosphoribosylaminoimidazole-succinocarboxamide synthase (250 aa).

It belongs to the SAICAR synthetase family.

It catalyses the reaction 5-amino-1-(5-phospho-D-ribosyl)imidazole-4-carboxylate + L-aspartate + ATP = (2S)-2-[5-amino-1-(5-phospho-beta-D-ribosyl)imidazole-4-carboxamido]succinate + ADP + phosphate + 2 H(+). It participates in purine metabolism; IMP biosynthesis via de novo pathway; 5-amino-1-(5-phospho-D-ribosyl)imidazole-4-carboxamide from 5-amino-1-(5-phospho-D-ribosyl)imidazole-4-carboxylate: step 1/2. The protein is Phosphoribosylaminoimidazole-succinocarboxamide synthase of Synechococcus sp. (strain WH7803).